Here is a 307-residue protein sequence, read N- to C-terminus: N-acetylglucosamine-1-phosphotransferase subunit gamma (307 aa).

The signal sequence occupies residues 1-24 (MAGRLAGFLMLLGLASQGPAPAYA). The 103-residue stretch at 69 to 171 (GKCFSLVEST…TFETPLVCHP (103 aa)) folds into the MRH domain. Cysteine 71 and cysteine 84 are disulfide-bonded. Asparagine 88 and asparagine 115 each carry an N-linked (GlcNAc...) asparagine glycan. 2 disulfides stabilise this stretch: cysteine 129–cysteine 157 and cysteine 142–cysteine 169. Positions 176–279 (VYPTLSEALQ…HTQPTETTHS (104 aa)) constitute a DMAP1-binding domain.

As to quaternary structure, homodimer; disulfide-linked. Hexamer of two alpha (GNPTAB), two beta (GNPTAB) and two gamma (GNPTG) subunits; disulfide-linked. The alpha and/or the beta subunits of the enzyme constitute the catalytic subunits. Post-translationally, cys-245 mediates the formation of the interchain disulfide bond for formation of the homodimer. Cys-142, Cys-157 and Cys-169 are involved in intramolecular disulfide bonds formation. As to expression, widely expressed. Highly expressed in the liver, intestine, brain, thymus, testis and ovary.

Its subcellular location is the secreted. It is found in the golgi apparatus. Its function is as follows. Non-catalytic subunit of the N-acetylglucosamine-1-phosphotransferase complex, an enzyme that catalyzes the formation of mannose 6-phosphate (M6P) markers on high mannose type oligosaccharides in the Golgi apparatus. Binds and presents the high mannose glycans of the acceptor to the catalytic alpha and beta subunits (GNPTAB). Enhances the rate of N-acetylglucosamine-1-phosphate transfer to the oligosaccharides of acid hydrolase acceptors. The chain is N-acetylglucosamine-1-phosphotransferase subunit gamma (Gnptg) from Mus musculus (Mouse).